The chain runs to 76 residues: KANTR integral membrane protein (76 aa).

The N-terminal stretch at 1-25 is a signal peptide; it reads MSPFSLLILVICAFSLFFLINLSRG. The Extracellular segment spans residues 26–34; sequence LSILLVFTK. The chain crosses the membrane as a helical span at residues 35-55; sequence NQLLALLLLSIVSLFSISLIS. Over 56–76 the chain is Cytoplasmic; the sequence is ALIFFDLLPSTFFGFILLLFF.

The protein localises to the membrane. In Mus musculus (Mouse), this protein is KANTR integral membrane protein.